The primary structure comprises 326 residues: Beta-ketoacyl-[acyl-carrier-protein] synthase III (326 aa).

Catalysis depends on residues C120 and H253. Residues 254–258 (QANIR) are ACP-binding. Residue N283 is part of the active site.

It belongs to the thiolase-like superfamily. FabH family. In terms of assembly, homodimer.

Its subcellular location is the cytoplasm. It catalyses the reaction malonyl-[ACP] + acetyl-CoA + H(+) = 3-oxobutanoyl-[ACP] + CO2 + CoA. It functions in the pathway lipid metabolism; fatty acid biosynthesis. Its function is as follows. Catalyzes the condensation reaction of fatty acid synthesis by the addition to an acyl acceptor of two carbons from malonyl-ACP. Catalyzes the first condensation reaction which initiates fatty acid synthesis and may therefore play a role in governing the total rate of fatty acid production. Possesses both acetoacetyl-ACP synthase and acetyl transacylase activities. Its substrate specificity determines the biosynthesis of branched-chain and/or straight-chain of fatty acids. The polypeptide is Beta-ketoacyl-[acyl-carrier-protein] synthase III (Ralstonia nicotianae (strain ATCC BAA-1114 / GMI1000) (Ralstonia solanacearum)).